A 579-amino-acid polypeptide reads, in one-letter code: Amino acid transporter 1 (579 aa).

Residues 1–83 (MSAKDYDFDI…KRGLSTRHMQ (83 aa)) are Cytoplasmic-facing. The helical transmembrane segment at 84–104 (LMSIGGAIGSGLYVGSGSALA) threads the bilayer. The Extracellular segment spans residues 105–108 (DGGP). Residues 109–129 (ASVIINYILIGIMMFFVIYAL) form a helical membrane-spanning segment. Over 130 to 161 (GEMAVAYPVAGSFNTYATRFIDPAWGFAVSWN) the chain is Cytoplasmic. The chain crosses the membrane as a helical span at residues 162–184 (YFFNYFVTFPFELTTCAITFTFW). Residues 185–186 (TD) are Extracellular-facing. Residues 187 to 207 (VNCAVWISIFLVVVIGINLFG) traverse the membrane as a helical segment. The Cytoplasmic portion of the chain corresponds to 208–215 (VRVFGEVE). A helical transmembrane segment spans residues 216 to 236 (FVLALIKVVATVGFIILAIII). The Extracellular portion of the chain corresponds to 237–265 (NCGGVPTDHRGYIGGSIIKQKPFRHGFKG). Residues 266 to 286 (FCSVYTTAAFSFSGTEIVGLA) form a helical membrane-spanning segment. Topologically, residues 287–303 (AAEVGDPRKTLPGAVKQ) are cytoplasmic. The helical transmembrane segment at 304–324 (VFWRVAIFYIVSLILIGLLIS) threads the bilayer. Topologically, residues 325–347 (PDDPKLMGNGSASVSPFVLAIQE) are extracellular. A helical membrane pass occupies residues 348 to 368 (ANIKGLPSVFNAVIIISVISV). At 369–401 (TNSSTYTAGRTLHGMANLKQAPAFFKYTDRLGR) the chain is on the cytoplasmic side. The helical transmembrane segment at 402–422 (PLIAMIVVLSFGFFAYINEAN) threads the bilayer. The Extracellular portion of the chain corresponds to 423-431 (NNGNDISDT). Residues 432–452 (VFDWLLAISGLSNFFTWGSIC) traverse the membrane as a helical segment. At 453-471 (LSHIMFRLAFKKQGHSLKE) the chain is on the cytoplasmic side. The chain crosses the membrane as a helical span at residues 472–492 (LGFVSPMGIWGSVIGLGFNIL). Over 493–513 (CLMAEFYVSLFPIGGSPNAND) the chain is Extracellular. A helical membrane pass occupies residues 514–534 (FFQGYLAACITLVFFIGYKIY). Residues 535 to 579 (DRSHIPSLDKLDITTGLKTYEYEETKDSSDTGRFRFFKKIINTVC) are Cytoplasmic-facing.

Belongs to the amino acid-polyamine-organocation (APC) superfamily.

Its subcellular location is the golgi apparatus membrane. It is found in the cell membrane. In terms of biological role, probable amino acid transporter that may play a role in function in microtubule organization since it causes microtubule defects when overexpressed. This is Amino acid transporter 1 (aat1) from Schizosaccharomyces pombe (strain 972 / ATCC 24843) (Fission yeast).